Consider the following 301-residue polypeptide: Acetylglutamate kinase (301 aa).

Residues 72-73 (GG), arginine 94, and asparagine 199 each bind substrate.

Belongs to the acetylglutamate kinase family. ArgB subfamily.

The protein localises to the cytoplasm. It catalyses the reaction N-acetyl-L-glutamate + ATP = N-acetyl-L-glutamyl 5-phosphate + ADP. Its pathway is amino-acid biosynthesis; L-arginine biosynthesis; N(2)-acetyl-L-ornithine from L-glutamate: step 2/4. Catalyzes the ATP-dependent phosphorylation of N-acetyl-L-glutamate. This chain is Acetylglutamate kinase, found in Bartonella bacilliformis (strain ATCC 35685 / KC583 / Herrer 020/F12,63).